Consider the following 134-residue polypeptide: NADPH-dependent 7-cyano-7-deazaguanine reductase (134 aa).

Cys-48 acts as the Thioimide intermediate in catalysis. Asp-55 (proton donor) is an active-site residue. Residues Val-70 to Leu-72 and Gln-89 to Glu-90 contribute to the substrate site.

It belongs to the GTP cyclohydrolase I family. QueF type 1 subfamily.

It localises to the cytoplasm. It carries out the reaction 7-aminomethyl-7-carbaguanine + 2 NADP(+) = 7-cyano-7-deazaguanine + 2 NADPH + 3 H(+). Its pathway is tRNA modification; tRNA-queuosine biosynthesis. In terms of biological role, catalyzes the NADPH-dependent reduction of 7-cyano-7-deazaguanine (preQ0) to 7-aminomethyl-7-deazaguanine (preQ1). This chain is NADPH-dependent 7-cyano-7-deazaguanine reductase, found in Caldanaerobacter subterraneus subsp. tengcongensis (strain DSM 15242 / JCM 11007 / NBRC 100824 / MB4) (Thermoanaerobacter tengcongensis).